The following is a 653-amino-acid chain: Multidomain regulatory protein MT1410 (653 aa).

Residues 86–142 (SGSEWRLQTDYDGSGVEERYFDFVVTPRRRADGSIEGVQLIVDDVTSRVRARQAAEA) enclose the PAC domain. Residues 177-396 (DIAAEYLVAA…DDVTLLAMQR (220 aa)) enclose the PPM-type phosphatase domain. Mn(2+) contacts are provided by D211, V212, D328, and D387. The interval 397-544 (RAPTPPLHIT…TMVRRAAFQQ (148 aa)) is anti-sigma factor kinase region. An STAS domain is found at 546–653 (IDSEFVSLVE…ADTEDIFAQE (108 aa)). Position 600 is a phosphoserine (S600).

The cofactor is Mg(2+). Requires Mn(2+) as cofactor. Post-translationally, autophosphorylated.

It carries out the reaction O-phospho-L-seryl-[protein] + H2O = L-seryl-[protein] + phosphate. The catalysed reaction is O-phospho-L-threonyl-[protein] + H2O = L-threonyl-[protein] + phosphate. It catalyses the reaction L-seryl-[protein] + ATP = O-phospho-L-seryl-[protein] + ADP + H(+). The enzyme catalyses L-threonyl-[protein] + ATP = O-phospho-L-threonyl-[protein] + ADP + H(+). Primarily acts as an independent SigF regulator that is sensitive to the osmosensory signal, mediating the cross talk of PknD with the SigF regulon. Possesses both phosphatase and kinase activities. The kinase domain functions as a classic anti-sigma factor-like kinase to phosphorylate the anti-anti-sigma factor domain at the canonical regulatory site, and the phosphatase domain antagonizes this activity. This Mycobacterium tuberculosis (strain CDC 1551 / Oshkosh) protein is Multidomain regulatory protein MT1410.